The primary structure comprises 289 residues: ATP synthase gamma chain (289 aa).

The protein belongs to the ATPase gamma chain family. In terms of assembly, F-type ATPases have 2 components, CF(1) - the catalytic core - and CF(0) - the membrane proton channel. CF(1) has five subunits: alpha(3), beta(3), gamma(1), delta(1), epsilon(1). CF(0) has three main subunits: a, b and c.

Its subcellular location is the cell membrane. Produces ATP from ADP in the presence of a proton gradient across the membrane. The gamma chain is believed to be important in regulating ATPase activity and the flow of protons through the CF(0) complex. The sequence is that of ATP synthase gamma chain from Buchnera aphidicola subsp. Melaphis rhois.